The following is a 189-amino-acid chain: dCTP deaminase, dUMP-forming (189 aa).

DCTP is bound by residues K101–R106, D119, T127–E129, Q148, Y162, and Q174. The active-site Proton donor/acceptor is the E129.

The protein belongs to the dCTP deaminase family. In terms of assembly, homotrimer.

The enzyme catalyses dCTP + 2 H2O = dUMP + NH4(+) + diphosphate. The protein operates within pyrimidine metabolism; dUMP biosynthesis; dUMP from dCTP: step 1/1. Bifunctional enzyme that catalyzes both the deamination of dCTP to dUTP and the hydrolysis of dUTP to dUMP without releasing the toxic dUTP intermediate. The sequence is that of dCTP deaminase, dUMP-forming from Rhodococcus opacus (strain B4).